We begin with the raw amino-acid sequence, 424 residues long: L-glutamine:2-deoxy-scyllo-inosose aminotransferase (424 aa).

K202 bears the N6-(pyridoxal phosphate)lysine mark.

The protein belongs to the DegT/DnrJ/EryC1 family. L-glutamine:2-deoxy-scyllo-inosose/scyllo-inosose aminotransferase subfamily. It depends on pyridoxal 5'-phosphate as a cofactor.

The catalysed reaction is 2-deoxy-L-scyllo-inosose + L-glutamine = 2-deoxy-scyllo-inosamine + 2-oxoglutaramate. The enzyme catalyses 3-amino-2,3-dideoxy-scyllo-inosose + L-glutamine = 2-deoxystreptamine + 2-oxoglutaramate. The protein operates within metabolic intermediate biosynthesis; 2-deoxystreptamine biosynthesis; 2-deoxystreptamine from D-glucose 6-phosphate: step 2/4. It functions in the pathway metabolic intermediate biosynthesis; 2-deoxystreptamine biosynthesis; 2-deoxystreptamine from D-glucose 6-phosphate: step 4/4. Its pathway is antibiotic biosynthesis; paromomycin biosynthesis. Functionally, catalyzes the PLP-dependent transamination of 2-deoxy-scyllo-inosose (2-DOI) to form 2-deoxy-scyllo-inosamine (2-DOIA) using L-glutamine as the amino donor. Also catalyzes the transamination of 3-amino-2,3-dideoxy-scyllo-inosose (keto-2-DOIA) into 2-deoxystreptamine (2-DOS). This chain is L-glutamine:2-deoxy-scyllo-inosose aminotransferase (parS), found in Streptomyces paromomycinus (Streptomyces rimosus subsp. paromomycinus).